The primary structure comprises 208 residues: ATP phosphoribosyltransferase (208 aa).

Belongs to the ATP phosphoribosyltransferase family. Short subfamily. Heteromultimer composed of HisG and HisZ subunits.

It localises to the cytoplasm. It carries out the reaction 1-(5-phospho-beta-D-ribosyl)-ATP + diphosphate = 5-phospho-alpha-D-ribose 1-diphosphate + ATP. Its pathway is amino-acid biosynthesis; L-histidine biosynthesis; L-histidine from 5-phospho-alpha-D-ribose 1-diphosphate: step 1/9. Catalyzes the condensation of ATP and 5-phosphoribose 1-diphosphate to form N'-(5'-phosphoribosyl)-ATP (PR-ATP). Has a crucial role in the pathway because the rate of histidine biosynthesis seems to be controlled primarily by regulation of HisG enzymatic activity. In Oceanobacillus iheyensis (strain DSM 14371 / CIP 107618 / JCM 11309 / KCTC 3954 / HTE831), this protein is ATP phosphoribosyltransferase.